Here is a 389-residue protein sequence, read N- to C-terminus: Nicotinate phosphoribosyltransferase (389 aa).

Phosphohistidine; by autocatalysis is present on histidine 211.

This sequence belongs to the NAPRTase family. Post-translationally, transiently phosphorylated on a His residue during the reaction cycle. Phosphorylation strongly increases the affinity for substrates and increases the rate of nicotinate D-ribonucleotide production. Dephosphorylation regenerates the low-affinity form of the enzyme, leading to product release.

The catalysed reaction is nicotinate + 5-phospho-alpha-D-ribose 1-diphosphate + ATP + H2O = nicotinate beta-D-ribonucleotide + ADP + phosphate + diphosphate. It functions in the pathway cofactor biosynthesis; NAD(+) biosynthesis; nicotinate D-ribonucleotide from nicotinate: step 1/1. Functionally, catalyzes the synthesis of beta-nicotinate D-ribonucleotide from nicotinate and 5-phospho-D-ribose 1-phosphate at the expense of ATP. The chain is Nicotinate phosphoribosyltransferase from Desulforapulum autotrophicum (strain ATCC 43914 / DSM 3382 / VKM B-1955 / HRM2) (Desulfobacterium autotrophicum).